The primary structure comprises 153 residues: Small ribosomal subunit protein bS16 (153 aa).

The disordered stretch occupies residues 114–153; it reads ENEPVGEAITPKKKKAKAEDAEAAADAPAEAAAESEAADK. Residues 137-153 show a composition bias toward low complexity; sequence AADAPAEAAAESEAADK.

Belongs to the bacterial ribosomal protein bS16 family.

The protein is Small ribosomal subunit protein bS16 of Rhodococcus opacus (strain B4).